The primary structure comprises 289 residues: ATP synthase mitochondrial F1 complex assembly factor 2 (289 aa).

The N-terminal 40 residues, 1–40 (MWRSCLRLRDGGRRLLNRPAGGPSASMSPGPTIPSPARAY), are a transit peptide targeting the mitochondrion. The tract at residues 13–40 (RRLLNRPAGGPSASMSPGPTIPSPARAY) is disordered. Position 133 is an N6-succinyllysine (Lys-133).

It belongs to the ATP12 family. In terms of assembly, interacts with ATP5F1B; involved in the assembly of the F1 component of the mitochondrial ATP synthase (ATPase). Interacts with FMC1. In terms of tissue distribution, widely expressed.

It localises to the mitochondrion inner membrane. Functionally, plays a role in the assembly of the F1 component of the mitochondrial ATP synthase (ATPase). In Homo sapiens (Human), this protein is ATP synthase mitochondrial F1 complex assembly factor 2.